Here is a 55-residue protein sequence, read N- to C-terminus: Lantibiotic epilancin 15X (55 aa).

Positions 1 to 24 (MKKELFDLNLNKDIEAQKSDLNPQ) are cleaved as a propeptide — cleaved by ElxP. Ser25 carries the D-lactate; by the dehydratase ElxB and the dehydrogenase ElxO modification. At Ser27 the chain carries 2,3-didehydroalanine (Ser); by the dehydratase ElxB. 2 positions are modified to 2,3-didehydrobutyrine; by the dehydratase ElxB: Thr31 and Thr32. The lanthionine (Ser-Cys); by the dehydratase ElxB and the cyclase ElxC cross-link spans 36–40 (SKKLC). Cross-links (beta-methyllanthionine (Thr-Cys); by the dehydratase ElxB and the cyclase ElxC) lie at residues 44–47 (TLTC) and 46–49 (TCGC). Thr52 carries the 2,3-didehydrobutyrine; by the dehydratase ElxB modification.

Maturation of this lantibiotic involves the enzymatic conversion of Thr, and Ser into dehydrated AA by ElxB and the formation of thioether bonds with cysteine by the cyclase ElxC. The next steps are cleavage of the leader peptide by ElxP and membrane translocation by ElxT. The leader peptide may be removed before membrane translocation, in contrast to other lantibiotics for which the cleavage occur after translocation. This is suggested by the probable cytoplasmic localization of the serine protease ElxP that cleaves the leader peptide. In terms of processing, the N-terminal D-lactate is probably produced by dehydration of Ser-25 by ElxB, followed by proteolytic removal of the leader peptide by the serine protease ElxP and hydrolysis of the resulting new N-terminal dehydroalanine. This hydrolysis may occur spontaneously. The pyruvate group thus formed is reduced to D-lactate by the NADPH-dependent oxidoreductase ElxO. This N-terminal D-lactate protects the lantibiotic against degradation against aminopeptidase. Post-translationally, it is not established whether the 2,3-didehydrobutyrines are the E- or Z-isomers.

Its function is as follows. Lanthionine-containing peptide antibiotic (lantibiotic) active on Gram-positive bacteria such as staphylococci, enterococci and streptococci. The bactericidal activity of lantibiotics is based on depolarization of energized bacterial cytoplasmic membranes, initiated by the formation of aqueous transmembrane pores. This Staphylococcus epidermidis protein is Lantibiotic epilancin 15X.